A 246-amino-acid chain; its full sequence is Probable septum site-determining protein MinC (246 aa).

Belongs to the MinC family. As to quaternary structure, interacts with MinD and FtsZ.

Functionally, cell division inhibitor that blocks the formation of polar Z ring septums. Rapidly oscillates between the poles of the cell to destabilize FtsZ filaments that have formed before they mature into polar Z rings. Prevents FtsZ polymerization. The sequence is that of Probable septum site-determining protein MinC from Pseudomonas syringae pv. syringae (strain B728a).